We begin with the raw amino-acid sequence, 157 residues long: Transcriptional repressor NrdR (157 aa).

The segment at 3–34 (CPFCNTVDTKVIDSRLVSEGSQIKRRRQCAIC) is a zinc-finger region. The 91-residue stretch at 49–139 (PRVIKNDDLL…VYRSFEDVRE (91 aa)) folds into the ATP-cone domain.

This sequence belongs to the NrdR family. Requires Zn(2+) as cofactor.

In terms of biological role, negatively regulates transcription of bacterial ribonucleotide reductase nrd genes and operons by binding to NrdR-boxes. In Hamiltonella defensa subsp. Acyrthosiphon pisum (strain 5AT), this protein is Transcriptional repressor NrdR.